A 594-amino-acid polypeptide reads, in one-letter code: UvrABC system protein C (594 aa).

The GIY-YIG domain maps to 17 to 94; it reads LEPGCYLMKD…IKQYQPRYNI (78 aa). A UVR domain is found at 199-234; the sequence is KTILHHLEDRMNKASEQLDFEQAKEYRDMIQHIHNL.

This sequence belongs to the UvrC family. In terms of assembly, interacts with UvrB in an incision complex.

The protein localises to the cytoplasm. In terms of biological role, the UvrABC repair system catalyzes the recognition and processing of DNA lesions. UvrC both incises the 5' and 3' sides of the lesion. The N-terminal half is responsible for the 3' incision and the C-terminal half is responsible for the 5' incision. The sequence is that of UvrABC system protein C from Staphylococcus epidermidis (strain ATCC 12228 / FDA PCI 1200).